Here is a 465-residue protein sequence, read N- to C-terminus: Serine/threonine-protein kinase 38 (465 aa).

Ala2 bears the N-acetylalanine mark. Residues 62–87 (KRLRRSAHARKETEFLRLKRTRLGLE) are interaction with S100B. Residue Thr74 is modified to Phosphothreonine. The Protein kinase domain occupies 89–382 (FESLKVIGRG…VEEIKNNSFF (294 aa)). ATP contacts are provided by residues 95-103 (IGRGAFGEV) and Lys118. Residue Asp212 is the Proton acceptor of the active site. Ser264 carries the post-translational modification Phosphoserine. Position 281 is a phosphoserine; by autocatalysis (Ser281). The short motif at 306-311 (WSLGVI) is the UFM1-interacting motif (UFIM) element. The AGC-kinase C-terminal domain occupies 383–455 (EGVDWEHIRE…KRFEGLTARG (73 aa)). Position 444 is a phosphothreonine; by STK24/MST3 (Thr444).

Belongs to the protein kinase superfamily. AGC Ser/Thr protein kinase family. In terms of assembly, homodimeric S100B binds two molecules of STK38. Interacts with MOB1 and MOB2. Interacts with MAP3K1 and MAP3K2 (via the kinase domain). Forms a tripartite complex with MOBKL1B and STK3/MST2. Interacts with MICAL1; leading to inhibit the protein kinase activity by antagonizing activation by MST1/STK4. Mg(2+) is required as a cofactor. In terms of processing, ISGylated. Post-translationally, phosphorylated by STK3/MST2 and this is enhanced by MOBKL1B.

The protein localises to the nucleus. Its subcellular location is the cytoplasm. It localises to the chromosome. It carries out the reaction L-seryl-[protein] + ATP = O-phospho-L-seryl-[protein] + ADP + H(+). The catalysed reaction is L-threonyl-[protein] + ATP = O-phospho-L-threonyl-[protein] + ADP + H(+). Activated by binding of S100B which releases autoinhibitory N-lobe interactions, enabling ATP to bind and the autophosphorylation of Ser-281. Thr-444 then undergoes calcium-dependent phosphorylation by STK24/MST3. Interactions between phosphorylated Thr-444 and the N-lobe promote additional structural changes that complete the activation of the kinase. Autoinhibition is also released by the binding of MOB1/MOBKL1A and MOB2/HCCA2 to the N-terminal of STK38. Serine/threonine-protein kinase that acts as a negative regulator of MAP3K1/2 signaling. Converts MAP3K2 from its phosphorylated form to its non-phosphorylated form and inhibits autophosphorylation of MAP3K2. Acts as an ufmylation 'reader' in a kinase-independent manner: specifically recognizes and binds mono-ufmylated histone H4 in response to DNA damage, promoting the recruitment of SUV39H1 to the double-strand breaks, resulting in ATM activation. This is Serine/threonine-protein kinase 38 (STK38) from Bos taurus (Bovine).